Reading from the N-terminus, the 486-residue chain is Cysteine--tRNA ligase (486 aa).

Cys-29 provides a ligand contact to Zn(2+). The short motif at 31–41 (VTVYDYCHLGH) is the 'HIGH' region element. Residues Cys-214, His-239, and Glu-243 each coordinate Zn(2+). The 'KMSKS' region signature appears at 271–275 (KMSKS). Lys-274 is a binding site for ATP.

The protein belongs to the class-I aminoacyl-tRNA synthetase family. Monomer. Zn(2+) serves as cofactor.

It is found in the cytoplasm. It carries out the reaction tRNA(Cys) + L-cysteine + ATP = L-cysteinyl-tRNA(Cys) + AMP + diphosphate. This is Cysteine--tRNA ligase from Nostoc sp. (strain PCC 7120 / SAG 25.82 / UTEX 2576).